We begin with the raw amino-acid sequence, 119 residues long: DNA-binding protein MMP0157 (119 aa).

Basic and acidic residues predominate over residues 1 to 12 (MNPEEIRQRRLQ). The segment at 1-35 (MNPEEIRQRRLQEMQAKAQAQGAANDPEAQRQMQE) is disordered.

The protein belongs to the PDCD5 family.

The chain is DNA-binding protein MMP0157 from Methanococcus maripaludis (strain DSM 14266 / JCM 13030 / NBRC 101832 / S2 / LL).